The following is a 512-amino-acid chain: GMP synthase [glutamine-hydrolyzing] (512 aa).

The 191-residue stretch at 7–197 folds into the Glutamine amidotransferase type-1 domain; that stretch reads TIIVLDFGSQ…VFGVCGCSEG (191 aa). Cysteine 84 acts as the Nucleophile in catalysis. Catalysis depends on residues histidine 171 and glutamate 173. The 190-residue stretch at 198-387 folds into the GMPS ATP-PPase domain; the sequence is WNMENFIEVE…LGIPDEIVWR (190 aa). Residue 225-231 coordinates ATP; the sequence is SGGVDSS.

In terms of assembly, homodimer.

It catalyses the reaction XMP + L-glutamine + ATP + H2O = GMP + L-glutamate + AMP + diphosphate + 2 H(+). It participates in purine metabolism; GMP biosynthesis; GMP from XMP (L-Gln route): step 1/1. In terms of biological role, catalyzes the synthesis of GMP from XMP. This chain is GMP synthase [glutamine-hydrolyzing], found in Bacillus cereus (strain G9842).